The chain runs to 403 residues: MQMPKTLRIRNGDKVRSTFSAQEYANRQARLRAHLAAENIDAAIFTSYHNINYYSDFLYCSFGRPYALVVTEDDVISISANIDGGQPWRRTVGTDNIVYTDWQRDNYFAAIQQALPKARRIGIEHDHLNLQNRDKLAARYPDAELVDVAAACMRMRMIKSAEEHVMIRHGARIADIGGAAVVEALGDQVPEYEVALHATQAMVRAIADTFEDVELMDTWTWFQSGINTDGAHNPVTTRKVNKGDILSLNCFPMIAGYYTALERTLFLDHCSDDHLRLWQVNVEVHEAGLKLIKPGARCSDIARELNEIFLKHDVLQYRTFGYGHSFGTLSHYYGREAGLELREDIDTVLEPGMVVSMEPMIMLPEGLPGAGGYREHDILIVNENGAENITKFPYGPEKNIIRK.

His232 is a catalytic residue.

This sequence belongs to the peptidase M24 family. Creatinase subfamily. In terms of assembly, homodimer.

It carries out the reaction creatine + H2O = sarcosine + urea. This Pseudomonas putida (Arthrobacter siderocapsulatus) protein is Creatinase.